The sequence spans 294 residues: Metallophosphoesterase MPPED2 (294 aa).

D65, H67, D86, N117, and H213 together coordinate Mn(2+). 117 to 118 (NH) provides a ligand contact to GMP. GMP is bound by residues 225–226 (KE) and 252–255 (GIHE). H254 contacts Mn(2+).

The protein belongs to the UPF0046 family. Homodimer. Mn(2+) is required as a cofactor. Co(2+) serves as cofactor. In terms of tissue distribution, expressed predominantly in fetal brain.

Inhibited by nmolar levels of AMP and GMP. Its function is as follows. Displays low metallophosphoesterase activity (in vitro). May play a role in the development of the nervous system. The chain is Metallophosphoesterase MPPED2 (MPPED2) from Homo sapiens (Human).